A 423-amino-acid chain; its full sequence is Deoxyguanosinetriphosphate triphosphohydrolase-like protein (423 aa).

Residues R66–S216 form the HD domain.

It belongs to the dGTPase family. Type 2 subfamily.

This Corynebacterium diphtheriae (strain ATCC 700971 / NCTC 13129 / Biotype gravis) protein is Deoxyguanosinetriphosphate triphosphohydrolase-like protein.